Consider the following 553-residue polypeptide: Putative transport protein YidE (553 aa).

The next 5 membrane-spanning stretches (helical) occupy residues 4-24, 28-48, 65-85, 95-115, and 158-178; these read IALT…IGNV, GIGL…HFVS, FGLI…FFAS, LFAV…HKLF, and MSYA…MWML. 2 RCK C-terminal domains span residues 191-276 and 279-361; these read QQHE…VIGQ and DTSL…VLGN. The next 5 helical transmembrane spans lie at 371–391, 394–414, 439–459, 464–484, and 533–553; these read MLPV…PVFV, FPAA…LILG, IVLF…NTLV, LSWI…VGIL, and LVMF…WSIG.

Belongs to the AAE transporter (TC 2.A.81) family. YidE subfamily.

It localises to the cell membrane. The sequence is that of Putative transport protein YidE from Shigella dysenteriae serotype 1 (strain Sd197).